The following is a 224-amino-acid chain: Glutathione S-transferase U28 (224 aa).

Residues 6 to 85 enclose the GST N-terminal domain; it reads SKVVVLDFWA…YIDETWTDAA (80 aa). Residues 16-17, 42-43, 56-57, and 69-70 contribute to the glutathione site; these read SP, NK, KV, and ES. One can recognise a GST C-terminal domain in the interval 91–217; it reads DPQSRATARF…EKVYQQVLKL (127 aa). At Thr154 the chain carries Phosphothreonine.

The protein belongs to the GST superfamily. Tau family.

It localises to the cytoplasm. It is found in the cytosol. It catalyses the reaction RX + glutathione = an S-substituted glutathione + a halide anion + H(+). In terms of biological role, may be involved in the conjugation of reduced glutathione to a wide number of exogenous and endogenous hydrophobic electrophiles and have a detoxification role against certain herbicides. The protein is Glutathione S-transferase U28 (GSTU28) of Arabidopsis thaliana (Mouse-ear cress).